Here is a 61-residue protein sequence, read N- to C-terminus: Small ribosomal subunit protein uS14 (61 aa).

Residues Cys-24, Cys-27, Cys-40, and Cys-43 each contribute to the Zn(2+) site.

The protein belongs to the universal ribosomal protein uS14 family. Zinc-binding uS14 subfamily. In terms of assembly, part of the 30S ribosomal subunit. Contacts proteins S3 and S10. Zn(2+) is required as a cofactor.

In terms of biological role, binds 16S rRNA, required for the assembly of 30S particles and may also be responsible for determining the conformation of the 16S rRNA at the A site. In Mycoplasma genitalium (strain ATCC 33530 / DSM 19775 / NCTC 10195 / G37) (Mycoplasmoides genitalium), this protein is Small ribosomal subunit protein uS14.